Here is a 329-residue protein sequence, read N- to C-terminus: Putative L-ascorbate peroxidase 6 (329 aa).

His-123 serves as the catalytic Proton acceptor. His-244 serves as a coordination point for heme b.

This sequence belongs to the peroxidase family. Ascorbate peroxidase subfamily. The cofactor is heme b.

It carries out the reaction L-ascorbate + H2O2 = L-dehydroascorbate + 2 H2O. Its function is as follows. Plays a key role in hydrogen peroxide removal. In Arabidopsis thaliana (Mouse-ear cress), this protein is Putative L-ascorbate peroxidase 6 (APX6).